We begin with the raw amino-acid sequence, 152 residues long: UPF0178 protein YaiI (152 aa).

Belongs to the UPF0178 family.

This Escherichia coli O81 (strain ED1a) protein is UPF0178 protein YaiI.